Reading from the N-terminus, the 119-residue chain is Phospholipase A2 A2-actitoxin-Cgg2a (119 aa).

6 disulfides stabilise this stretch: C25–C119, C27–C43, C42–C101, C49–C94, C61–C87, and C78–C92. Ca(2+) is bound by residues G28 and G30. The active site involves H46. D47 is a binding site for Ca(2+). The active site involves D95.

Belongs to the phospholipase A2 family. Homodimer. The cofactor is Ca(2+).

Its subcellular location is the secreted. The protein localises to the nematocyst. It catalyses the reaction a 1,2-diacyl-sn-glycero-3-phosphocholine + H2O = a 1-acyl-sn-glycero-3-phosphocholine + a fatty acid + H(+). Its function is as follows. Sea anemone phospholipase A2 (PLA2). When incubated with plasma, this protein shows a moderate anticoagulant activity (0.15 ug of enzyme/200 uL of plasma), inhibiting clotting induced by thrombin. This enzyme also induces myotoxicity, and edema. PLA2 catalyzes the calcium-dependent hydrolysis of the 2-acyl groups in 3-sn-phosphoglycerides. The protein is Phospholipase A2 A2-actitoxin-Cgg2a of Condylactis gigantea (Giant Caribbean anemone).